The sequence spans 223 residues: Serine/threonine/tyrosine-interacting protein (223 aa).

One can recognise a Tyrosine-protein phosphatase domain in the interval 28–176 (EMQEVLPGLF…LQEYEAIYLA (149 aa)). Residues 76-78 (FQQ) carry the Interaction with FBXW7 motif. Phosphoserine is present on residues serine 184 and serine 201. The tract at residues 199-223 (TGSVKRTHEEDDDFGNMQVATAQNG) is disordered.

It belongs to the protein-tyrosine phosphatase family. Non-receptor class subfamily. In terms of assembly, interacts with MAPK1; independently of MAPK1 phosphorylation status. Interacts with CARHSP1/Crhsp-24. Interacts (via FQQ motif) with FBXW7 (via F-box domain); the interaction is direct and prevents FBXW7 interaction with SKP1, a component of the SCF(FBXW7) complex. In terms of tissue distribution, widely expressed with highest levels in muscle, testis and brain. In testis, expression starts 13-14 days after birth and is limited to the seminiferous tubule and to round and elongating spermatids. Expression is low in condensing spermatids and pachytene spermatocytes, and absent in spermatogonia, spermatozoa and somatic Sertoli cells.

The protein resides in the nucleus. It localises to the cytoplasm. It is found in the cytosol. Catalytically inactive phosphatase. Acts as a nuclear anchor for MAPK1/MAPK3 (ERK1/ERK2). Modulates cell-fate decisions and cell migration by spatiotemporal regulation of MAPK1/MAPK3 (ERK1/ERK2). By binding to the F-box of FBXW7, prevents the assembly of FBXW7 into the SCF E3 ubiquitin-protein ligase complex, and thereby inhibits degradation of its substrates. Plays a role in spermatogenesis. This is Serine/threonine/tyrosine-interacting protein from Mus musculus (Mouse).